A 152-amino-acid chain; its full sequence is MEAVLNELVSVEDLLKFEKKFQSEKAAGSVSKSTQFEYAWCLVRSKYNDDIRKGIVLLEELLPKGSKEEQRDYVFYLAVGNYRLKEYEKALKYVRGLLQTEPQNNQAKELERLIDKAMKKDGLVGMAIVGGMALGVAGLAGLIGLAVSKSKS.

The residue at position 1 (Met-1) is an N-acetylmethionine. The Cytoplasmic segment spans residues 1–122; that stretch reads MEAVLNELVS…LIDKAMKKDG (122 aa). At Ser-10 the chain carries Phosphoserine. The stretch at 71–104 is one TPR repeat; that stretch reads RDYVFYLAVGNYRLKEYEKALKYVRGLLQTEPQN. A helical transmembrane segment spans residues 123–143; sequence LVGMAIVGGMALGVAGLAGLI. The Mitochondrial intermembrane segment spans residues 144 to 152; the sequence is GLAVSKSKS.

It belongs to the FIS1 family. In terms of assembly, interacts with DNM1L/DLP1 through the TPR region; may form part of a larger protein complex at the endoplasmic reticulum-mitochondrial interface during mitochondrial fission. Interacts with MARCHF5. Interacts with MIEF1. Interacts with PEX11A, PEX11B and PEX11G. Post-translationally, ubiquitinated by MARCHF5.

It is found in the mitochondrion outer membrane. Its subcellular location is the peroxisome membrane. Its function is as follows. Involved in the fragmentation of the mitochondrial network and its perinuclear clustering. Plays a minor role in the recruitment and association of the fission mediator dynamin-related protein 1 (DNM1L) to the mitochondrial surface and mitochondrial fission. May not be essential for the assembly of functional fission complexes and the subsequent membrane scission event. Also mediates peroxisomal fission. May act when the products of fission are directed toward mitochondrial homeostasis, mitophagy, or apoptosis. Can induce cytochrome c release from the mitochondrion to the cytosol, ultimately leading to apoptosis. This Homo sapiens (Human) protein is Mitochondrial fission 1 protein (FIS1).